Reading from the N-terminus, the 275-residue chain is Voltage-dependent calcium channel gamma-5 subunit (275 aa).

4 consecutive transmembrane segments (helical) span residues Ala-8–Val-28, Phe-103–Ile-123, Ile-129–Leu-149, and Phe-181–Met-201.

This sequence belongs to the PMP-22/EMP/MP20 family. CACNG subfamily. In terms of assembly, the L-type calcium channel is composed of five subunits: alpha-1, alpha-2/delta, beta and gamma. Acts as an auxiliary subunit for AMPA-selective glutamate receptors (AMPARs). Found in a complex with GRIA1, GRIA2, GRIA3, GRIA4, CNIH2, CNIH3, CACNG2, CACNG3, CACNG4, CACNG7 and CACNG8. Interacts with GRIA1, GRIA2, GRIA3 and GRIA4. In terms of tissue distribution, brain. Enriched in Bergman glia, as well as a variety of neuronal populations including locus coeruleus, olfactory bulb, lateral septal nucleus, interpeduncular nucleus, and the CA2 and rostral/medial CA1 regions of hippocampus.

The protein localises to the membrane. It is found in the postsynaptic density membrane. Its function is as follows. Regulates the gating properties of AMPA-selective glutamate receptors (AMPARs). Modulates their gating properties by accelerating their rates of activation, deactivation and desensitization. Displays subunit-specific AMPA receptor regulation. Shows specificity for GRIA1, GRIA4 and the long isoform of GRIA2. Thought to stabilize the calcium channel in an inactivated (closed) state. This Mus musculus (Mouse) protein is Voltage-dependent calcium channel gamma-5 subunit (Cacng5).